The primary structure comprises 412 residues: MLGSTGSIGTQTLEIAKECPEQFKVVALTAGRNLDLLIKQIQEHQPEVVALARKDILPELQERLNSLTGKERPNALPHLVAGNDGLNIAASWHSADLVVTGIVGCAGLLPTLAAIKAGKDIALANKETLIAAGPVVIPELKRSGSRLLPADSEHSAIFQCLQGTPWPENARLSTGIPTPGLRNIQLTASGGAFRDWATEDLKHASIKDATSHPNWSMGKKITVDSATLMNKGLEVIEAHYLFGLDYDHIEIVIHPQSIIHSMIELNDSSVLAQMGWPDMKLPILYAMSWPNRINTSWRRLNLSEIGKLTFHEPDTSKYPCMELAYAAGKAAGTMPAVLNAANEEAVALFLEEKIHFLNIPKVIEAACENHKKDLKFDPQLQDVIEVDYWARREVRSQVQKDSNQITMATYKK.

NADPH-binding residues include Thr-5, Gly-6, Ser-7, Ile-8, Gly-31, Arg-32, Asn-33, and Asn-125. 1-deoxy-D-xylulose 5-phosphate is bound at residue Lys-126. Glu-127 lines the NADPH pocket. Residue Asp-151 participates in Mn(2+) binding. 1-deoxy-D-xylulose 5-phosphate contacts are provided by Ser-152, Glu-153, Ser-189, and His-212. Residue Glu-153 coordinates Mn(2+). Position 218 (Gly-218) interacts with NADPH. 1-deoxy-D-xylulose 5-phosphate is bound by residues Ser-225, Asn-230, Lys-231, and Glu-234. Glu-234 serves as a coordination point for Mn(2+).

The protein belongs to the DXR family. Mg(2+) is required as a cofactor. The cofactor is Mn(2+).

It catalyses the reaction 2-C-methyl-D-erythritol 4-phosphate + NADP(+) = 1-deoxy-D-xylulose 5-phosphate + NADPH + H(+). The protein operates within isoprenoid biosynthesis; isopentenyl diphosphate biosynthesis via DXP pathway; isopentenyl diphosphate from 1-deoxy-D-xylulose 5-phosphate: step 1/6. In terms of biological role, catalyzes the NADPH-dependent rearrangement and reduction of 1-deoxy-D-xylulose-5-phosphate (DXP) to 2-C-methyl-D-erythritol 4-phosphate (MEP). The sequence is that of 1-deoxy-D-xylulose 5-phosphate reductoisomerase from Prochlorococcus marinus (strain SARG / CCMP1375 / SS120).